The following is a 231-amino-acid chain: Protein OPG061 (231 aa).

The protein belongs to the orthopoxvirus OPG058 family.

It localises to the host nucleus. The protein resides in the host nucleolus. This is Protein OPG061 (OPG061) from Vaccinia virus (strain L-IVP) (VACV).